The sequence spans 106 residues: Immunoglobulin lambda constant 1 (106 aa).

The Ig-like domain occupies 7-101; the sequence is PTVTLFPPSS…EGSTVEKTVA (95 aa). Cys28 and Cys87 form a disulfide bridge.

In terms of assembly, immunoglobulins are composed of two identical heavy chains and two identical light chains; disulfide-linked.

It localises to the secreted. The protein resides in the cell membrane. In terms of biological role, constant region of immunoglobulin light chains. Immunoglobulins, also known as antibodies, are membrane-bound or secreted glycoproteins produced by B lymphocytes. In the recognition phase of humoral immunity, the membrane-bound immunoglobulins serve as receptors which, upon binding of a specific antigen, trigger the clonal expansion and differentiation of B lymphocytes into immunoglobulins-secreting plasma cells. Secreted immunoglobulins mediate the effector phase of humoral immunity, which results in the elimination of bound antigens. The antigen binding site is formed by the variable domain of one heavy chain, together with that of its associated light chain. Thus, each immunoglobulin has two antigen binding sites with remarkable affinity for a particular antigen. The variable domains are assembled by a process called V-(D)-J rearrangement and can then be subjected to somatic hypermutations which, after exposure to antigen and selection, allow affinity maturation for a particular antigen. The polypeptide is Immunoglobulin lambda constant 1 (Homo sapiens (Human)).